The following is a 95-amino-acid chain: Putative membrane protein insertion efficiency factor (95 aa).

The disordered stretch occupies residues 72-95 (FDPVPDAPTSPSPSSSCSCKGPHP). Residues 83-95 (SPSSSCSCKGPHP) are compositionally biased toward low complexity.

It belongs to the UPF0161 family.

Its subcellular location is the cell inner membrane. Functionally, could be involved in insertion of integral membrane proteins into the membrane. This Xanthomonas axonopodis pv. citri (strain 306) protein is Putative membrane protein insertion efficiency factor.